Here is a 277-residue protein sequence, read N- to C-terminus: Bifunctional protein FolD (277 aa).

NADP(+) contacts are provided by residues 164–166 (GRS), S189, and T230.

This sequence belongs to the tetrahydrofolate dehydrogenase/cyclohydrolase family. Homodimer.

The catalysed reaction is (6R)-5,10-methylene-5,6,7,8-tetrahydrofolate + NADP(+) = (6R)-5,10-methenyltetrahydrofolate + NADPH. It catalyses the reaction (6R)-5,10-methenyltetrahydrofolate + H2O = (6R)-10-formyltetrahydrofolate + H(+). It participates in one-carbon metabolism; tetrahydrofolate interconversion. Its function is as follows. Catalyzes the oxidation of 5,10-methylenetetrahydrofolate to 5,10-methenyltetrahydrofolate and then the hydrolysis of 5,10-methenyltetrahydrofolate to 10-formyltetrahydrofolate. The chain is Bifunctional protein FolD from Clostridium perfringens (strain 13 / Type A).